Reading from the N-terminus, the 160-residue chain is S-ribosylhomocysteine lyase (160 aa).

The Fe cation site is built by H57, H61, and C127.

The protein belongs to the LuxS family. As to quaternary structure, homodimer. The cofactor is Fe cation.

It carries out the reaction S-(5-deoxy-D-ribos-5-yl)-L-homocysteine = (S)-4,5-dihydroxypentane-2,3-dione + L-homocysteine. Involved in the synthesis of autoinducer 2 (AI-2) which is secreted by bacteria and is used to communicate both the cell density and the metabolic potential of the environment. The regulation of gene expression in response to changes in cell density is called quorum sensing. Catalyzes the transformation of S-ribosylhomocysteine (RHC) to homocysteine (HC) and 4,5-dihydroxy-2,3-pentadione (DPD). This is S-ribosylhomocysteine lyase from Streptococcus thermophilus (strain CNRZ 1066).